Reading from the N-terminus, the 326-residue chain is DNA-directed RNA polymerase subunit alpha (326 aa).

The alpha N-terminal domain (alpha-NTD) stretch occupies residues 1 to 231 (MQTNLLKPKI…DQLVVFAALE (231 aa)). An alpha C-terminal domain (alpha-CTD) region spans residues 247 to 326 (VDPMLMRPVD…ESWPPANLEK (80 aa)).

Belongs to the RNA polymerase alpha chain family. In terms of assembly, homodimer. The RNAP catalytic core consists of 2 alpha, 1 beta, 1 beta' and 1 omega subunit. When a sigma factor is associated with the core the holoenzyme is formed, which can initiate transcription.

The enzyme catalyses RNA(n) + a ribonucleoside 5'-triphosphate = RNA(n+1) + diphosphate. Its function is as follows. DNA-dependent RNA polymerase catalyzes the transcription of DNA into RNA using the four ribonucleoside triphosphates as substrates. The sequence is that of DNA-directed RNA polymerase subunit alpha from Polynucleobacter necessarius subsp. necessarius (strain STIR1).